A 141-amino-acid chain; its full sequence is Large ribosomal subunit protein uL11 (141 aa).

The protein belongs to the universal ribosomal protein uL11 family. In terms of assembly, part of the ribosomal stalk of the 50S ribosomal subunit. Interacts with L10 and the large rRNA to form the base of the stalk. L10 forms an elongated spine to which L12 dimers bind in a sequential fashion forming a multimeric L10(L12)X complex. Post-translationally, one or more lysine residues are methylated.

In terms of biological role, forms part of the ribosomal stalk which helps the ribosome interact with GTP-bound translation factors. This Geobacillus thermodenitrificans (strain NG80-2) protein is Large ribosomal subunit protein uL11.